The following is a 237-amino-acid chain: Ribonuclease PH (237 aa).

Residues Arg86 and 124–126 contribute to the phosphate site; that span reads GTR.

Belongs to the RNase PH family. Homohexameric ring arranged as a trimer of dimers.

The catalysed reaction is tRNA(n+1) + phosphate = tRNA(n) + a ribonucleoside 5'-diphosphate. Functionally, phosphorolytic 3'-5' exoribonuclease that plays an important role in tRNA 3'-end maturation. Removes nucleotide residues following the 3'-CCA terminus of tRNAs; can also add nucleotides to the ends of RNA molecules by using nucleoside diphosphates as substrates, but this may not be physiologically important. Probably plays a role in initiation of 16S rRNA degradation (leading to ribosome degradation) during starvation. The sequence is that of Ribonuclease PH from Bradyrhizobium sp. (strain BTAi1 / ATCC BAA-1182).